The primary structure comprises 355 residues: Protein RecA (355 aa).

Glycine 67–threonine 74 provides a ligand contact to ATP.

Belongs to the RecA family.

Its subcellular location is the cytoplasm. Functionally, can catalyze the hydrolysis of ATP in the presence of single-stranded DNA, the ATP-dependent uptake of single-stranded DNA by duplex DNA, and the ATP-dependent hybridization of homologous single-stranded DNAs. It interacts with LexA causing its activation and leading to its autocatalytic cleavage. The protein is Protein RecA of Shewanella baltica (strain OS223).